A 984-amino-acid polypeptide reads, in one-letter code: Probable translation initiation factor IF-2 (984 aa).

Residues 94–215 (VNGWYSVTVT…LPLLLLRFGI (122 aa)) enclose the DOD-type homing endonuclease domain. The 218-residue stretch at 391–608 (TTETHNFVAN…LIAGLSQKYL (218 aa)) folds into the tr-type G domain. GTP is bound by residues 464–468 (DTPGH) and 518–521 (NKID).

Belongs to the TRAFAC class translation factor GTPase superfamily. Classic translation factor GTPase family. IF-2 subfamily. Post-translationally, this protein undergoes a protein self splicing that involves a post-translational excision of the intervening region (intein) followed by peptide ligation.

Functionally, function in general translation initiation by promoting the binding of the formylmethionine-tRNA to ribosomes. Seems to function along with eIF-2. The protein is Probable translation initiation factor IF-2 (infB) of Pyrococcus furiosus (strain ATCC 43587 / DSM 3638 / JCM 8422 / Vc1).